Consider the following 329-residue polypeptide: Lipoyl synthase (329 aa).

[4Fe-4S] cluster is bound by residues Cys72, Cys77, Cys83, Cys98, Cys102, Cys105, and Ser313. Residues Cys83–Glu303 enclose the Radical SAM core domain.

This sequence belongs to the radical SAM superfamily. Lipoyl synthase family. The cofactor is [4Fe-4S] cluster.

It is found in the cytoplasm. It catalyses the reaction [[Fe-S] cluster scaffold protein carrying a second [4Fe-4S](2+) cluster] + N(6)-octanoyl-L-lysyl-[protein] + 2 oxidized [2Fe-2S]-[ferredoxin] + 2 S-adenosyl-L-methionine + 4 H(+) = [[Fe-S] cluster scaffold protein] + N(6)-[(R)-dihydrolipoyl]-L-lysyl-[protein] + 4 Fe(3+) + 2 hydrogen sulfide + 2 5'-deoxyadenosine + 2 L-methionine + 2 reduced [2Fe-2S]-[ferredoxin]. The protein operates within protein modification; protein lipoylation via endogenous pathway; protein N(6)-(lipoyl)lysine from octanoyl-[acyl-carrier-protein]: step 2/2. In terms of biological role, catalyzes the radical-mediated insertion of two sulfur atoms into the C-6 and C-8 positions of the octanoyl moiety bound to the lipoyl domains of lipoate-dependent enzymes, thereby converting the octanoylated domains into lipoylated derivatives. The protein is Lipoyl synthase of Legionella pneumophila (strain Paris).